Here is a 313-residue protein sequence, read N- to C-terminus: Protein FixB (313 aa).

An FAD-binding site is contributed by 255-283 (LYLAVGISGQIQHMVGANASQTIFAINKD).

It belongs to the ETF alpha-subunit/FixB family. In terms of assembly, heterodimer of FixA and FixB.

It participates in amine and polyamine metabolism; carnitine metabolism. Functionally, required for anaerobic carnitine reduction. May bring reductant to CaiA. The polypeptide is Protein FixB (Escherichia coli O157:H7).